The following is a 324-amino-acid chain: Olfactory receptor 2T2 (324 aa).

Residues 1–26 (MGMEGLLQNSTNFVLTGLITHPAFPG) are Extracellular-facing. An N-linked (GlcNAc...) asparagine glycan is attached at Asn-9. Residues 27-50 (LLFAIVFSIFVVAITANLVMILLI) traverse the membrane as a helical segment. Residues 51 to 58 (HMDSRLHT) lie on the Cytoplasmic side of the membrane. A helical transmembrane segment spans residues 59–80 (PMYFLLSQLSIMDTIYICITVP). Over 81–101 (KMLQDLLSKDKTISFLGCAVQ) the chain is Extracellular. Residues Cys-98 and Cys-190 are joined by a disulfide bond. Residues 102-121 (IFLYLTLIGGEFFLLGLMAY) form a helical membrane-spanning segment. The Cytoplasmic segment spans residues 122–140 (DRYVAVCNPLRYPLLMNRR). A helical transmembrane segment spans residues 141-159 (VCLFMVVGSWVGGSLDGFM). Topologically, residues 160–196 (LTPVTMSFPFCRSREINHFFCEIPAVLKLSCTDTSLY) are extracellular. Residues 197–220 (ETLMYACCVLMLLIPLSVISVSYT) form a helical membrane-spanning segment. The Cytoplasmic segment spans residues 221-237 (HILLTVHRMNSAEGRRK). The chain crosses the membrane as a helical span at residues 238–260 (AFATCSSHIMVVSVFYGAAFYTN). Residues 261-273 (VLPHSYHTPEKDK) lie on the Extracellular side of the membrane. Residues 274–293 (VVSAFYTILTPMLNPLIYSL) form a helical membrane-spanning segment. Topologically, residues 294–324 (RNKDVAAALRKVLGRCGSSQSIRVATVIRKG) are cytoplasmic.

Belongs to the G-protein coupled receptor 1 family.

Its subcellular location is the cell membrane. Odorant receptor. This is Olfactory receptor 2T2 (OR2T2) from Homo sapiens (Human).